A 736-amino-acid chain; its full sequence is Cytosolic neutral trehalase (736 aa).

A disordered region spans residues M1–N47. Residues G11–N33 show a composition bias toward basic and acidic residues. Residues S35 to N47 are compositionally biased toward polar residues. Ca(2+) is bound by residues D92, D94, N96, Q98, and D103. Substrate is bound by residues R279, W286–D287, N323, R332–Q334, E399, R448, and G451. Active-site proton donor/acceptor residues include D453 and E657.

It belongs to the glycosyl hydrolase 37 family. Ca(2+) is required as a cofactor.

The protein resides in the cytoplasm. The enzyme catalyses alpha,alpha-trehalose + H2O = alpha-D-glucose + beta-D-glucose. It participates in carbohydrate degradation. Functionally, hydrolyzes intracellular trehalose to glucose. Plays a role in pathogenicity, specifically in proliferation of invasive hyphae in rice blast disease. This chain is Cytosolic neutral trehalase (NTH1), found in Pyricularia oryzae (strain 70-15 / ATCC MYA-4617 / FGSC 8958) (Rice blast fungus).